Reading from the N-terminus, the 378-residue chain is MELKKLMEHISIIPDYRQAWKVEHKLSGILLLTIFAVISGAESWEDIEDFGETHLDFLKQYGDFENGIPVHDTIARVVSCISPAKFHECFINWMRDCHSSNDKDVIAIDGKTLRHSYDKSRRRGAIHVISAFSTMHSLVIGQIKTDKKSNEITAIPELLNMLDIKGKIITTDAMGCQKDIAEKIQKQGGDYLFAVKGNQGRLNKAFEEKFPLKELNNPEHDSYAMSEKSHGREEIRLHIVCDVPDELIDFTFEWKGLKKLCVAVSFRSIIAEQKKEPEMTVRYYISSADLTAEKFATAIRNHWHVENKLHWRLDVVMNEDDCKIRRGNAAELFSGIRHIAINILTNDKVFKAGLRRKMRKAAMDRNYLASVLAGSGLS.

It belongs to the transposase 11 family.

The chain is Putative protein YbfL (ybfL) from Escherichia coli (strain K12).